The sequence spans 421 residues: Esterase LipQ (421 aa).

Active-site residues include serine 249, aspartate 344, and histidine 377.

The protein belongs to the 'GDXG' lipolytic enzyme family.

It catalyses the reaction hexadecanoate ester + H2O = an aliphatic alcohol + hexadecanoate + H(+). Its function is as follows. Shows lipase activity. Is highly immunogenic and may play an important role in the virulence and pathogenesis of M.tuberculosis infection, by altering the balance of cytokines. Significantly down-regulates the expression level of pro-inflammatory cytokines (TNF-alpha and IFN-gamma) and up-regulates the level of anti-inflammatory cytokines such as IL-4 and IL-10 as compared to LPS stimulated macrophages. Also inhibits the expression of iNOS, TLR2 and transcription factor NF-kappa-B in LPS stimulated macrophages whereas the expression of TLR-4 remains unchanged. The sequence is that of Esterase LipQ from Mycobacterium tuberculosis (strain ATCC 25618 / H37Rv).